The chain runs to 366 residues: UDP-N-acetylglucosamine--N-acetylmuramyl-(pentapeptide) pyrophosphoryl-undecaprenol N-acetylglucosamine transferase (366 aa).

Residues 10 to 12 (TGG), asparagine 124, serine 195, and glutamine 295 each bind UDP-N-acetyl-alpha-D-glucosamine.

It belongs to the glycosyltransferase 28 family. MurG subfamily.

Its subcellular location is the cell membrane. The enzyme catalyses di-trans,octa-cis-undecaprenyl diphospho-N-acetyl-alpha-D-muramoyl-L-alanyl-D-glutamyl-meso-2,6-diaminopimeloyl-D-alanyl-D-alanine + UDP-N-acetyl-alpha-D-glucosamine = di-trans,octa-cis-undecaprenyl diphospho-[N-acetyl-alpha-D-glucosaminyl-(1-&gt;4)]-N-acetyl-alpha-D-muramoyl-L-alanyl-D-glutamyl-meso-2,6-diaminopimeloyl-D-alanyl-D-alanine + UDP + H(+). It functions in the pathway cell wall biogenesis; peptidoglycan biosynthesis. Cell wall formation. Catalyzes the transfer of a GlcNAc subunit on undecaprenyl-pyrophosphoryl-MurNAc-pentapeptide (lipid intermediate I) to form undecaprenyl-pyrophosphoryl-MurNAc-(pentapeptide)GlcNAc (lipid intermediate II). The polypeptide is UDP-N-acetylglucosamine--N-acetylmuramyl-(pentapeptide) pyrophosphoryl-undecaprenol N-acetylglucosamine transferase (Bacillus licheniformis (strain ATCC 14580 / DSM 13 / JCM 2505 / CCUG 7422 / NBRC 12200 / NCIMB 9375 / NCTC 10341 / NRRL NRS-1264 / Gibson 46)).